Reading from the N-terminus, the 265-residue chain is HTH-type transcriptional activator CfaD (265 aa).

An HTH araC/xylS-type domain is found at 164 to 261 (DKVRNVIEKD…GVTPKQFFTY (98 aa)). DNA-binding regions (H-T-H motif) lie at residues 181-202 (GIIA…ESEN) and 228-251 (ISQI…NKHY).

In terms of assembly, homodimer.

Its function is as follows. Transcriptional activator of the CFA/I adhesin (cfaA and cfaB) genes of enterotoxigenic E.coli at 37 degrees Celsius. Also represses the silencing effect of H-NS (hns). The protein is HTH-type transcriptional activator CfaD of Escherichia coli.